Reading from the N-terminus, the 132-residue chain is Replication enhancer protein (132 aa).

The protein belongs to the geminiviridae replication enhancer protein family. Homooligomer. Interacts with the replication-associated protein (REP). Interacts with host proliferating cell nuclear antigen (PCNA). Interacts with host retinoblastoma-related protein 1 (RBR1), and may thereby deregulate the host cell cycle. Oligomerization and interaction with PCNA are necessary for optimal replication enhancement.

In terms of biological role, increases viral DNA accumulation. Enhances infectivity and symptom expression. This chain is Replication enhancer protein, found in Macroptilium lathyroides (Lima bean).